The following is a 196-amino-acid chain: uncharacterized protein (196 aa).

The N-terminal stretch at 1-27 is a signal peptide; the sequence is MSVLSRAVQLAFVALGLCLFFSNLVAA.

It is found in the secreted. This is an uncharacterized protein from Arthroderma benhamiae (strain ATCC MYA-4681 / CBS 112371) (Trichophyton mentagrophytes).